Reading from the N-terminus, the 68-residue chain is Venom-like beta-defensin (68 aa).

Positions 1 to 24 (MRLLILFLAVVTLLSLAGPGSAEV) are cleaved as a signal peptide. 3 disulfides stabilise this stretch: cysteine 33-cysteine 60, cysteine 40-cysteine 54, and cysteine 47-cysteine 61.

In terms of tissue distribution, highly expressed in intestine, liver and spleen and expressed at lower levels in brain, kidney, lung, testis and venom gland.

The protein localises to the secreted. Its function is as follows. Potent antimicrobial peptide that displays activity against S.aureus and P.aeruginosa. Does not inhibit growth of E.coli. This chain is Venom-like beta-defensin, found in Ornithorhynchus anatinus (Duckbill platypus).